The sequence spans 681 residues: Serine/threonine-protein kinase PAK 6 (681 aa).

3 disordered regions span residues Met-1 to Glu-30, Gln-200 to Leu-256, and Thr-268 to Trp-355. Residues Ile-12 to Ser-25 enclose the CRIB domain. Positions Phe-26–Leu-406 are linker. 2 stretches are compositionally biased toward low complexity: residues Ser-201–Thr-212 and Thr-268–Lys-278. Polar residues predominate over residues Ser-308–Leu-333. In terms of domain architecture, Protein kinase spans Leu-407–Leu-658. Residues Ile-413–Val-421 and Lys-436 each bind ATP. Asp-526 acts as the Proton acceptor in catalysis. Ser-560 carries the post-translational modification Phosphoserine; by autocatalysis.

It belongs to the protein kinase superfamily. STE Ser/Thr protein kinase family. STE20 subfamily. As to quaternary structure, interacts tightly with GTP-bound but not GDP-bound CDC42/p21 and RAC1. Interacts with the androgen receptor AR. Interacts with IQGAP1 and PPM1B. In terms of processing, autophosphorylated. Phosphorylated by MAP2K6/MAPKK6, leading to PAK6 activation.

The protein resides in the cytoplasm. The protein localises to the nucleus. It carries out the reaction L-seryl-[protein] + ATP = O-phospho-L-seryl-[protein] + ADP + H(+). The catalysed reaction is L-threonyl-[protein] + ATP = O-phospho-L-threonyl-[protein] + ADP + H(+). Its function is as follows. Serine/threonine protein kinase that plays a role in the regulation of gene transcription. The kinase activity is induced by various effectors including AR or MAP2K6/MAPKK6. Phosphorylates the DNA-binding domain of androgen receptor/AR and thereby inhibits AR-mediated transcription. Also inhibits ESR1-mediated transcription. May play a role in cytoskeleton regulation by interacting with IQGAP1. May protect cells from apoptosis through phosphorylation of BAD. The chain is Serine/threonine-protein kinase PAK 6 (PAK6) from Pongo abelii (Sumatran orangutan).